The following is a 389-amino-acid chain: Phospho-N-acetylmuramoyl-pentapeptide-transferase (389 aa).

A run of 10 helical transmembrane segments spans residues Arg25 to Ile45, Thr73 to Leu93, Phe97 to Tyr117, Phe135 to Ala155, Ile190 to Ala210, Gly222 to Met242, Gly258 to Trp278, Val286 to Ile306, Ile311 to Val331, and Gln366 to Leu386.

Belongs to the glycosyltransferase 4 family. MraY subfamily. It depends on Mg(2+) as a cofactor.

The protein localises to the cell inner membrane. The enzyme catalyses UDP-N-acetyl-alpha-D-muramoyl-L-alanyl-gamma-D-glutamyl-meso-2,6-diaminopimeloyl-D-alanyl-D-alanine + di-trans,octa-cis-undecaprenyl phosphate = di-trans,octa-cis-undecaprenyl diphospho-N-acetyl-alpha-D-muramoyl-L-alanyl-D-glutamyl-meso-2,6-diaminopimeloyl-D-alanyl-D-alanine + UMP. It participates in cell wall biogenesis; peptidoglycan biosynthesis. In terms of biological role, catalyzes the initial step of the lipid cycle reactions in the biosynthesis of the cell wall peptidoglycan: transfers peptidoglycan precursor phospho-MurNAc-pentapeptide from UDP-MurNAc-pentapeptide onto the lipid carrier undecaprenyl phosphate, yielding undecaprenyl-pyrophosphoryl-MurNAc-pentapeptide, known as lipid I. The chain is Phospho-N-acetylmuramoyl-pentapeptide-transferase from Burkholderia mallei (strain NCTC 10247).